The sequence spans 1002 residues: Calmin (1002 aa).

The segment at 1–288 is actin-binding; sequence MAAHEWDWFQ…IMTYVAQFLE (288 aa). A Calponin-homology (CH) 1 domain is found at 32 to 139; that stretch reads NVQKRTFTRW…LIWNIILFFQ (108 aa). Residues 149 to 168 are compositionally biased toward low complexity; the sequence is RNSPSSSLSPGSGGTDSDSS. Positions 149-180 are disordered; that stretch reads RNSPSSSLSPGSGGTDSDSSFPPTPTAERSVA. Residues 187 to 291 form the Calponin-homology (CH) 2 domain; that stretch reads RKAIKALLAW…YVAQFLERFP (105 aa). Phosphoserine is present on residues Ser-301 and Ser-402. 4 disordered regions span residues 389 to 418, 500 to 532, 581 to 716, and 749 to 911; these read QGGP…GRSN, NNNS…GENT, NKVP…SPPL, and DLKN…DSSI. The segment covering 396-409 has biased composition (low complexity); the sequence is SDISEPSPESSILS. The segment covering 500 to 509 has biased composition (polar residues); sequence NNNSQSSSCN. Over residues 585 to 606 the composition is skewed to basic and acidic residues; sequence SPHETKPDEDAEAFENHAEKLG. The span at 607–617 shows a compositional bias: basic residues; the sequence is KRSIKSAHKKK. Basic and acidic residues-rich tracts occupy residues 618-635 and 650-659; these read DSPE…HQDS and PVDKKPEVHE. Ser-619 is subject to Phosphoserine. Residues 681–697 show a composition bias toward low complexity; it reads GVGEELSSSPPSSCVSL. Thr-699 is subject to Phosphothreonine. Ser-713 and Ser-769 each carry phosphoserine. Over residues 776-794 the composition is skewed to low complexity; sequence GSQSSSSSSVPGESLPSAS. The segment covering 818 to 834 has biased composition (basic and acidic residues); the sequence is PHEDHQQRETKENDPMD. A compositionally biased stretch (polar residues) spans 835–846; that stretch reads SHQSQESPNLEN. Ser-838 and Ser-841 each carry phosphoserine. Positions 854–863 are enriched in basic and acidic residues; the sequence is NVTKESISSK. Over residues 898–910 the composition is skewed to polar residues; sequence YSIPSRTSHSDSS. A Phosphoserine modification is found at Ser-907. A helical; Anchor for type IV membrane protein transmembrane segment spans residues 977–997; it reads MMYFILFLWLLVYCLLLFPQL.

In terms of tissue distribution, widely expressed at intermediate level.

It localises to the membrane. In Homo sapiens (Human), this protein is Calmin (CLMN).